Here is a 1210-residue protein sequence, read N- to C-terminus: DNA-directed RNA polymerase II subunit RPB2 (1210 aa).

D826 is a binding site for Mg(2+). Zn(2+)-binding residues include C1152, C1155, C1170, and C1173. The segment at 1152–1173 (CDICGLIAIASYKKDSYECRSC) adopts a C4-type zinc-finger fold.

Belongs to the RNA polymerase beta chain family. In terms of assembly, component of the RNA polymerase II (Pol II) complex consisting of 12 subunits.

The protein localises to the nucleus. The enzyme catalyses RNA(n) + a ribonucleoside 5'-triphosphate = RNA(n+1) + diphosphate. Its function is as follows. DNA-dependent RNA polymerase catalyzes the transcription of DNA into RNA using the four ribonucleoside triphosphates as substrates. Second largest component of RNA polymerase II which synthesizes mRNA precursors and many functional non-coding RNAs. Proposed to contribute to the polymerase catalytic activity and forms the polymerase active center together with the largest subunit. Pol II is the central component of the basal RNA polymerase II transcription machinery. It is composed of mobile elements that move relative to each other. RPB2 is part of the core element with the central large cleft, the clamp element that moves to open and close the cleft and the jaws that are thought to grab the incoming DNA template. The protein is DNA-directed RNA polymerase II subunit RPB2 (rpb2) of Schizosaccharomyces pombe (strain 972 / ATCC 24843) (Fission yeast).